A 139-amino-acid chain; its full sequence is Plastocyanin (139 aa).

The first 34 residues, 1–34 (MKLIAQISRSLSLALFALVLMVGSFVAVMSPAAA), serve as a signal peptide directing secretion. Residues 35–139 (ETFTVKMGAD…GMVGKITVEG (105 aa)) enclose the Plastocyanin-like domain. His73, Cys123, His126, and Met131 together coordinate Cu cation.

The protein belongs to the plastocyanin family. Requires Cu(2+) as cofactor.

It is found in the cellular thylakoid membrane. In terms of biological role, participates in electron transfer between P700 and the cytochrome b6-f complex in photosystem I. The polypeptide is Plastocyanin (petE) (Leptolyngbya laminosa (Phormidium laminosum)).